The chain runs to 311 residues: Acetaldehyde dehydrogenase 1 (311 aa).

11 to 14 (SGNI) lines the NAD(+) pocket. Residue Cys-129 is the Acyl-thioester intermediate of the active site. NAD(+) is bound by residues 161-169 (SAGPGTRAN) and Asn-288.

Belongs to the acetaldehyde dehydrogenase family.

The catalysed reaction is acetaldehyde + NAD(+) + CoA = acetyl-CoA + NADH + H(+). The sequence is that of Acetaldehyde dehydrogenase 1 from Novosphingobium aromaticivorans (strain ATCC 700278 / DSM 12444 / CCUG 56034 / CIP 105152 / NBRC 16084 / F199).